A 483-amino-acid chain; its full sequence is Protein DETOXIFICATION 6 (483 aa).

The next 12 helical transmembrane spans lie at 38–58 (ALPM…SVMV), 69–89 (GVAL…FGLA), 113–133 (FSAI…WFYM), 146–166 (ISKV…AQAV), 187–207 (AITT…AFGL), 211–231 (GAAL…ALYV), 263–283 (AAMT…SGLL), 292–312 (VLSI…GIGA), 334–354 (VFAG…LLFI), 376–396 (LSPL…LGGV), 405–425 (IGAW…GLFL), and 436–456 (LWIG…IVTA).

Belongs to the multi antimicrobial extrusion (MATE) (TC 2.A.66.1) family.

It localises to the membrane. This Arabidopsis thaliana (Mouse-ear cress) protein is Protein DETOXIFICATION 6.